The following is a 90-amino-acid chain: Small ribosomal subunit protein uS15c (90 aa).

This sequence belongs to the universal ribosomal protein uS15 family. In terms of assembly, part of the 30S ribosomal subunit.

Its subcellular location is the plastid. The protein resides in the chloroplast. The polypeptide is Small ribosomal subunit protein uS15c (rps15) (Buxus microphylla (Littleleaf boxwood)).